A 901-amino-acid polypeptide reads, in one-letter code: HTH-type transcriptional regulator MalT (901 aa).

39–46 lines the ATP pocket; that stretch reads SPAGYGKT. The HTH luxR-type domain maps to 829–894; it reads ELIRTSPLTQ…DAVQHAQQLL (66 aa). A DNA-binding region (H-T-H motif) is located at residues 853–872; that stretch reads NEQIAGELAVAATTIKTHIR.

The protein belongs to the MalT family. As to quaternary structure, monomer in solution. Oligomerizes to an active state in the presence of the positive effectors ATP and maltotriose.

With respect to regulation, activated by ATP and maltotriose, which are both required for DNA binding. Positively regulates the transcription of the maltose regulon whose gene products are responsible for uptake and catabolism of malto-oligosaccharides. Specifically binds to the promoter region of its target genes, recognizing a short DNA motif called the MalT box. This is HTH-type transcriptional regulator MalT from Salmonella agona (strain SL483).